Reading from the N-terminus, the 90-residue chain is Antitoxin epsilon 1 (90 aa).

Belongs to the epsilon antitoxin family. As to quaternary structure, in the presence of the zeta toxin, forms an inactive PezA(2)PezT(2) heterotetramer.

Functionally, antitoxin component of a type II toxin-antitoxin (TA) system. Neutralizes the toxic effect of zeta toxin. Part of a postsegregational killing (PSK) system involved in the killing of plasmid-free cells. Continuous synthesis of the epsilon antitoxin is required to counteract the zeta toxin. This is Antitoxin epsilon 1 from Enterococcus faecalis (Streptococcus faecalis).